We begin with the raw amino-acid sequence, 2304 residues long: Protein Ycf2 (2304 aa).

ATP is bound at residue 1637–1644 (GSIGTGRS).

It belongs to the Ycf2 family.

The protein resides in the plastid. The protein localises to the chloroplast stroma. Probable ATPase of unknown function. Its presence in a non-photosynthetic plant (Epifagus virginiana) and experiments in tobacco indicate that it has an essential function which is probably not related to photosynthesis. This chain is Protein Ycf2, found in Amborella trichopoda.